The primary structure comprises 346 residues: Haptoglobin-related protein (346 aa).

Residues 1–16 (DLGAVIYLLLWGRQLF) constitute a signal peptide (not cleaved). One can recognise a Sushi domain in the interval 32 to 85 (FPKPPEIANGYVEHLFRYQRKNYYRLRTEGDGVYTLNDKKQWINKAVGDKLPEC). One can recognise a Peptidase S1 domain in the interval 102-344 (ILGGHLDAKG…IHVWVQKTIA (243 aa)). 2 disulfides stabilise this stretch: cysteine 249–cysteine 280 and cysteine 291–cysteine 321.

It belongs to the peptidase S1 family.

The protein localises to the secreted. Its function is as follows. Primate-specific plasma protein associated with apolipoprotein L-I (apoL-I)-containing high-density lipoprotein (HDL). Binds hemoglobin with high affinity and may contribute to the clearance of cell-free hemoglobin to allow hepatic recycling of heme iron. The chain is Haptoglobin-related protein (HPR) from Pan troglodytes (Chimpanzee).